The sequence spans 482 residues: Spore germination protein A1 (482 aa).

6 consecutive transmembrane segments (helical) span residues 242-262 (VAILVDSSPFVLLVPVSLGIL), 284-304 (FASIFITLFLSSIYITLVSFH), 321-341 (ENVPFPPIFEALLMEVTIELL), 351-371 (PLGQTIGLVGGVVIGQAAVEA), 373-393 (LVSSILVIVVSVIALASFTVP), and 406-426 (FISMFSAAILGLYGIILFMLV).

This sequence belongs to the GerABKA family.

The protein resides in the cell membrane. Forms a complex at the inner spore membrane which acts as a receptor for L-alanine, thus is involved in the stimulation of germination in response to alanine. Can stimulate germination in the absence of GerD and GerK gene products (fructose and glucose receptors, respectively), but the response is improved in their presence. The sequence is that of Spore germination protein A1 (gerAA) from Bacillus subtilis (strain 168).